The chain runs to 790 residues: Endonuclease MutS2 (790 aa).

334–341 (GPNTGGKT) contacts ATP. In terms of domain architecture, Smr spans 713–788 (LDVRGMTLDD…GDGVTIVELH (76 aa)).

This sequence belongs to the DNA mismatch repair MutS family. MutS2 subfamily. As to quaternary structure, homodimer. Binds to stalled ribosomes, contacting rRNA.

Endonuclease that is involved in the suppression of homologous recombination and thus may have a key role in the control of bacterial genetic diversity. In terms of biological role, acts as a ribosome collision sensor, splitting the ribosome into its 2 subunits. Detects stalled/collided 70S ribosomes which it binds and splits by an ATP-hydrolysis driven conformational change. Acts upstream of the ribosome quality control system (RQC), a ribosome-associated complex that mediates the extraction of incompletely synthesized nascent chains from stalled ribosomes and their subsequent degradation. Probably generates substrates for RQC. The polypeptide is Endonuclease MutS2 (Caldanaerobacter subterraneus subsp. tengcongensis (strain DSM 15242 / JCM 11007 / NBRC 100824 / MB4) (Thermoanaerobacter tengcongensis)).